We begin with the raw amino-acid sequence, 422 residues long: Gamma-glutamyl phosphate reductase (422 aa).

It belongs to the gamma-glutamyl phosphate reductase family.

The protein resides in the cytoplasm. It carries out the reaction L-glutamate 5-semialdehyde + phosphate + NADP(+) = L-glutamyl 5-phosphate + NADPH + H(+). The protein operates within amino-acid biosynthesis; L-proline biosynthesis; L-glutamate 5-semialdehyde from L-glutamate: step 2/2. Its function is as follows. Catalyzes the NADPH-dependent reduction of L-glutamate 5-phosphate into L-glutamate 5-semialdehyde and phosphate. The product spontaneously undergoes cyclization to form 1-pyrroline-5-carboxylate. This Nitrosomonas eutropha (strain DSM 101675 / C91 / Nm57) protein is Gamma-glutamyl phosphate reductase.